Consider the following 298-residue polypeptide: HTH-type transcriptional regulator ArgP (298 aa).

Residues 4 to 60 form the HTH lysR-type domain; sequence LDYRWIEALDSVVSKGSFERAAEQLFISQSAVSQRIKQLEKYLAQPVLIREQPPRPT. A DNA-binding region (H-T-H motif) is located at residues 21-40; that stretch reads FERAAEQLFISQSAVSQRIK.

The protein belongs to the LysR transcriptional regulatory family. Homodimer.

In terms of biological role, controls the transcription of genes involved in arginine and lysine metabolism. In Vibrio cholerae serotype O1 (strain ATCC 39315 / El Tor Inaba N16961), this protein is HTH-type transcriptional regulator ArgP.